The sequence spans 134 residues: Phosphoribosyl-AMP cyclohydrolase (134 aa).

Residue Asp78 participates in Mg(2+) binding. Cys79 contributes to the Zn(2+) binding site. 2 residues coordinate Mg(2+): Asp80 and Asp82. Residues Cys96 and Cys103 each coordinate Zn(2+).

Belongs to the PRA-CH family. In terms of assembly, homodimer. The cofactor is Mg(2+). Zn(2+) is required as a cofactor.

Its subcellular location is the cytoplasm. It carries out the reaction 1-(5-phospho-beta-D-ribosyl)-5'-AMP + H2O = 1-(5-phospho-beta-D-ribosyl)-5-[(5-phospho-beta-D-ribosylamino)methylideneamino]imidazole-4-carboxamide. Its pathway is amino-acid biosynthesis; L-histidine biosynthesis; L-histidine from 5-phospho-alpha-D-ribose 1-diphosphate: step 3/9. Its function is as follows. Catalyzes the hydrolysis of the adenine ring of phosphoribosyl-AMP. This chain is Phosphoribosyl-AMP cyclohydrolase, found in Cupriavidus necator (strain ATCC 17699 / DSM 428 / KCTC 22496 / NCIMB 10442 / H16 / Stanier 337) (Ralstonia eutropha).